The sequence spans 216 residues: Large ribosomal subunit protein uL1 (216 aa).

It belongs to the universal ribosomal protein uL1 family.

The chain is Large ribosomal subunit protein uL1 from Oryza sativa subsp. indica (Rice).